A 736-amino-acid chain; its full sequence is MVRYKQTMEILKIMRNLEQVRNIGITAHVDHGKTTLSDSLLAAAGIISEKIAGEALALDYLDVEQRRGITVKSANISLYHEYKGKPYVINLIDTPGHVDFSAKTTRAMRVIDGAILVVDAVEGVMTQTEMYLRAALEERVRPVLFINKVDRLIKELRLSPQEIQQRFVQIIKEVNQLIAMYADKEFKTKWQLDPAKGQVAFGSARDRWGFTVPMAKQKGIKFSDIVDLYKKGKEALPELQKLAPLHEAVLDMVVKFIPNPREAQKYRLPKIWHGDLNSEIGKAMLETDPNGPLVMLVNDVRIDPHAGLVATGRVFSGTLRAGEEVWLVNARMKQKVLQVSLYMGPYRELADEIVAGNIAAVLGLDKARAGETVVAVEYKDMMTPFEKLRMISEPVVTVAIEPKNPRDLPKLIDALHKLSIEDPSLVVRINEETGEYLLSGMGPLHIEIALTFLKENYGLDVIASQPIIVYRESIRDKSRVFEGKSPNKHNKLYISVEPLDEKTISLIHDGIITEDMDPKQRAKVLREEAGWPTDQARRIWAIDENINVFVDLTTGVQHLREVKDTIIQGFRLAMREGPLAMEPVRGVKVILHDAIIHEDPAHRGPGQIYPAVRNAIYAGMLTAKPTLLEPIQKLDIKAPMEYLGNITTIITKKRGKILQVLQQGAVARIIAEIPVAETFDLAEQLRGATAGKAIWGQEFSRWAPVPDSMLLDLVRKIRERKGLKPEPPRPEDFIGF.

The tr-type G domain maps to 18-261 (EQVRNIGITA…MVVKFIPNPR (244 aa)). GTP is bound by residues 27–34 (AHVDHGKT), 93–97 (DTPGH), and 147–150 (NKVD). H602 is subject to Diphthamide.

The protein belongs to the TRAFAC class translation factor GTPase superfamily. Classic translation factor GTPase family. EF-G/EF-2 subfamily.

The protein resides in the cytoplasm. Its function is as follows. Catalyzes the GTP-dependent ribosomal translocation step during translation elongation. During this step, the ribosome changes from the pre-translocational (PRE) to the post-translocational (POST) state as the newly formed A-site-bound peptidyl-tRNA and P-site-bound deacylated tRNA move to the P and E sites, respectively. Catalyzes the coordinated movement of the two tRNA molecules, the mRNA and conformational changes in the ribosome. This chain is Elongation factor 2, found in Staphylothermus marinus (strain ATCC 43588 / DSM 3639 / JCM 9404 / F1).